The following is a 158-amino-acid chain: 6,7-dimethyl-8-ribityllumazine synthase (158 aa).

Residues F22, A56–E58, and V80–I82 each bind 5-amino-6-(D-ribitylamino)uracil. E85–T86 provides a ligand contact to (2S)-2-hydroxy-3-oxobutyl phosphate. The active-site Proton donor is H88. N113 contacts 5-amino-6-(D-ribitylamino)uracil. R127 contributes to the (2S)-2-hydroxy-3-oxobutyl phosphate binding site.

The protein belongs to the DMRL synthase family.

It carries out the reaction (2S)-2-hydroxy-3-oxobutyl phosphate + 5-amino-6-(D-ribitylamino)uracil = 6,7-dimethyl-8-(1-D-ribityl)lumazine + phosphate + 2 H2O + H(+). Its pathway is cofactor biosynthesis; riboflavin biosynthesis; riboflavin from 2-hydroxy-3-oxobutyl phosphate and 5-amino-6-(D-ribitylamino)uracil: step 1/2. In terms of biological role, catalyzes the formation of 6,7-dimethyl-8-ribityllumazine by condensation of 5-amino-6-(D-ribitylamino)uracil with 3,4-dihydroxy-2-butanone 4-phosphate. This is the penultimate step in the biosynthesis of riboflavin. The chain is 6,7-dimethyl-8-ribityllumazine synthase from Neisseria gonorrhoeae (strain ATCC 700825 / FA 1090).